We begin with the raw amino-acid sequence, 327 residues long: GTPase Obg (327 aa).

The Obg domain maps to 1–159; it reads MQFIDQANII…WEVQLELKLL (159 aa). The region spanning 160–327 is the OBG-type G domain; sequence AEVGIIGLPN…SLLSEVWNRI (168 aa). Residues 166–173, 191–195, 213–216, 280–283, and 309–311 each bind ATP; these read GLPNAGKS, FTTLI, DIPG, NKKE, and SSA. Mg(2+) is bound by residues Ser173 and Thr193.

It belongs to the TRAFAC class OBG-HflX-like GTPase superfamily. OBG GTPase family. Monomer. Mg(2+) serves as cofactor.

The protein resides in the cytoplasm. Functionally, an essential GTPase which binds GTP, GDP and possibly (p)ppGpp with moderate affinity, with high nucleotide exchange rates and a fairly low GTP hydrolysis rate. Plays a role in control of the cell cycle, stress response, ribosome biogenesis and in those bacteria that undergo differentiation, in morphogenesis control. The sequence is that of GTPase Obg from Prochlorococcus marinus (strain MIT 9515).